We begin with the raw amino-acid sequence, 120 residues long: uncharacterized protein (120 aa).

The N-terminal stretch at 1–18 is a signal peptide; that stretch reads MRSWIPLLVLFAVLAVFA. The interval 20-99 is disordered; it reads AGKSSESDES…GDNRVKRDGL (80 aa).

This is an uncharacterized protein from Caenorhabditis elegans.